The primary structure comprises 136 residues: Small ribosomal subunit protein uS9 (136 aa).

Positions 97–136 are disordered; it reads SPDNRKPLKTEGHLSRDPRAKERRKYGLKKARKAPQFSKR. Residues 98–116 are compositionally biased toward basic and acidic residues; sequence PDNRKPLKTEGHLSRDPRA. Over residues 117–136 the composition is skewed to basic residues; the sequence is KERRKYGLKKARKAPQFSKR.

It belongs to the universal ribosomal protein uS9 family.

The chain is Small ribosomal subunit protein uS9 from Prochlorococcus marinus (strain MIT 9312).